We begin with the raw amino-acid sequence, 157 residues long: Selenoprotein F (157 aa).

Positions 1–19 (MSGEVYILWLLSLIQTLSA) are cleaved as a signal peptide. Position 84 (Sec84) is a non-standard amino acid, selenocysteine.

This sequence belongs to the selenoprotein M/F family. Expressed in the brain, liver and retina. Localized to the retinal ganglion cell layer, the inner nuclear layer and the outer nuclear layer at both parr and smolt stages.

It localises to the endoplasmic reticulum lumen. Functionally, may be involved in redox reactions associated with the formation of disulfide bonds. May contribute to the quality control of protein folding in the endoplasmic reticulum. May be involved in retinal development. The chain is Selenoprotein F from Oncorhynchus mykiss (Rainbow trout).